We begin with the raw amino-acid sequence, 350 residues long: GTPase Obg (350 aa).

Residues 1 to 159 (MRFIDQTEIF…FRLHLELKLL (159 aa)) form the Obg domain. The region spanning 160–328 (AEVGIIGLPN…LLQQVWEELD (169 aa)) is the OBG-type G domain. GTP contacts are provided by residues 166–173 (GLPNAGKS), 191–195 (FTTLI), 213–216 (DIPG), 280–283 (NKID), and 309–311 (SAV). Mg(2+) is bound by residues Ser-173 and Thr-193.

This sequence belongs to the TRAFAC class OBG-HflX-like GTPase superfamily. OBG GTPase family. Monomer. The cofactor is Mg(2+).

The protein resides in the cytoplasm. Its function is as follows. An essential GTPase which binds GTP, GDP and possibly (p)ppGpp with moderate affinity, with high nucleotide exchange rates and a fairly low GTP hydrolysis rate. Plays a role in control of the cell cycle, stress response, ribosome biogenesis and in those bacteria that undergo differentiation, in morphogenesis control. The protein is GTPase Obg of Acaryochloris marina (strain MBIC 11017).